A 324-amino-acid chain; its full sequence is tRNA uridine(34) hydroxylase (324 aa).

Residues 145 to 239 form the Rhodanese domain; sequence NDKKTIFIDM…YVHDARKNGL (95 aa). The Cysteine persulfide intermediate role is filled by Cys-199.

This sequence belongs to the TrhO family.

It catalyses the reaction uridine(34) in tRNA + AH2 + O2 = 5-hydroxyuridine(34) in tRNA + A + H2O. Functionally, catalyzes oxygen-dependent 5-hydroxyuridine (ho5U) modification at position 34 in tRNAs. This Buchnera aphidicola subsp. Acyrthosiphon pisum (strain APS) (Acyrthosiphon pisum symbiotic bacterium) protein is tRNA uridine(34) hydroxylase.